The following is a 284-amino-acid chain: Bifunctional protein FolD (284 aa).

NADP(+)-binding positions include 166–168, serine 191, and isoleucine 232; that span reads GAS.

Belongs to the tetrahydrofolate dehydrogenase/cyclohydrolase family. In terms of assembly, homodimer.

The enzyme catalyses (6R)-5,10-methylene-5,6,7,8-tetrahydrofolate + NADP(+) = (6R)-5,10-methenyltetrahydrofolate + NADPH. It catalyses the reaction (6R)-5,10-methenyltetrahydrofolate + H2O = (6R)-10-formyltetrahydrofolate + H(+). It functions in the pathway one-carbon metabolism; tetrahydrofolate interconversion. Catalyzes the oxidation of 5,10-methylenetetrahydrofolate to 5,10-methenyltetrahydrofolate and then the hydrolysis of 5,10-methenyltetrahydrofolate to 10-formyltetrahydrofolate. The sequence is that of Bifunctional protein FolD from Neisseria meningitidis serogroup B (strain ATCC BAA-335 / MC58).